The following is a 25-amino-acid chain: Alpha-amylase inhibitor (25 aa).

As to quaternary structure, monomer or homodimer. Post-translationally, may exist both in a glycosylated and in an unglycosylated form.

The protein resides in the secreted. Functionally, inhibits alpha-amylases but not trypsin. Is more effective against insect alpha-amylases than those of mammals. In Secale cereale (Rye), this protein is Alpha-amylase inhibitor.